The sequence spans 150 residues: 16.6 kDa heat shock protein (150 aa).

The sHSP domain maps to alanine 31–glycine 150.

It belongs to the small heat shock protein (HSP20) family. In terms of assembly, may form oligomeric structures.

It localises to the cytoplasm. This is 16.6 kDa heat shock protein (HSP16.6) from Oryza sativa subsp. japonica (Rice).